A 300-amino-acid chain; its full sequence is Tyrosine recombinase XerC (300 aa).

The 86-residue stretch at 1-86 (MESVLDAFDQ…AVKTFTAWAV (86 aa)) folds into the Core-binding (CB) domain. One can recognise a Tyr recombinase domain in the interval 107–294 (TLPAVLRQDQ…TVARLRAVHD (188 aa)). Active-site residues include Arg-151, Lys-175, His-246, Arg-249, and His-272. Catalysis depends on Tyr-281, which acts as the O-(3'-phospho-DNA)-tyrosine intermediate.

This sequence belongs to the 'phage' integrase family. XerC subfamily. In terms of assembly, forms a cyclic heterotetrameric complex composed of two molecules of XerC and two molecules of XerD.

The protein resides in the cytoplasm. Functionally, site-specific tyrosine recombinase, which acts by catalyzing the cutting and rejoining of the recombining DNA molecules. The XerC-XerD complex is essential to convert dimers of the bacterial chromosome into monomers to permit their segregation at cell division. It also contributes to the segregational stability of plasmids. The chain is Tyrosine recombinase XerC from Mycobacterium sp. (strain JLS).